Consider the following 391-residue polypeptide: Fructose-bisphosphate aldolase 3, chloroplastic (391 aa).

The N-terminal 40 residues, 1 to 40 (MASASFVKPNTLSSPWIGQRSFAHTSASSSPPPRVSFAIR), are a transit peptide targeting the chloroplast. Arginine 88 serves as a coordination point for substrate. At serine 150 the chain carries Phosphoserine. Residue lysine 178 participates in substrate binding. Serine 208 carries the post-translational modification Phosphoserine. The active-site Proton acceptor is the glutamate 218. Lysine 260 acts as the Schiff-base intermediate with dihydroxyacetone-P in catalysis. 302-304 (SGG) contacts substrate. N6,N6,N6-trimethyllysine is present on lysine 387.

Belongs to the class I fructose-bisphosphate aldolase family. In terms of assembly, homotetramer. Can be trimethylated at Lys-387 by LSMT-L, but the trimethylation has no effect in vitro. In terms of processing, S-glutathionylated. As to expression, expressed in roots, and at low levels in rosettes leaves, cauline leaves, stems and flowers.

The protein localises to the plastid. The protein resides in the chloroplast. It localises to the plastoglobule. It carries out the reaction beta-D-fructose 1,6-bisphosphate = D-glyceraldehyde 3-phosphate + dihydroxyacetone phosphate. The protein operates within carbohydrate degradation; glycolysis; D-glyceraldehyde 3-phosphate and glycerone phosphate from D-glucose: step 4/4. In terms of biological role, plays a key role in glycolysis and gluconeogenesis. The chain is Fructose-bisphosphate aldolase 3, chloroplastic from Arabidopsis thaliana (Mouse-ear cress).